The chain runs to 100 residues: Small ribosomal subunit protein uS14 (100 aa).

It belongs to the universal ribosomal protein uS14 family. Part of the 30S ribosomal subunit. Contacts proteins S3 and S10.

Functionally, binds 16S rRNA, required for the assembly of 30S particles and may also be responsible for determining the conformation of the 16S rRNA at the A site. This chain is Small ribosomal subunit protein uS14, found in Nostoc sp. (strain PCC 7120 / SAG 25.82 / UTEX 2576).